A 147-amino-acid polypeptide reads, in one-letter code: Protein MGF 100-3L (147 aa).

The protein belongs to the asfivirus MGF 100 family.

Its function is as follows. Plays a role in virus cell tropism, and may be required for efficient virus replication in macrophages. This chain is Protein MGF 100-3L, found in African swine fever virus (isolate Tick/Malawi/Lil 20-1/1983) (ASFV).